The primary structure comprises 386 residues: 2-isopropylmalate synthase (386 aa).

Positions 15–269 (IRIFDTTLRD…ETNVKTWKLY (255 aa)) constitute a Pyruvate carboxyltransferase domain. D24, H207, H209, and N243 together coordinate a divalent metal cation.

Belongs to the alpha-IPM synthase/homocitrate synthase family. Homodimer. It depends on a divalent metal cation as a cofactor.

The catalysed reaction is 3-methyl-2-oxobutanoate + acetyl-CoA + H2O = (2S)-2-isopropylmalate + CoA + H(+). It functions in the pathway amino-acid biosynthesis; L-leucine biosynthesis; L-leucine from 3-methyl-2-oxobutanoate: step 1/4. In terms of biological role, catalyzes the condensation of the acetyl group of acetyl-CoA with 3-methyl-2-oxobutanoate (2-oxoisovalerate) to form 3-carboxy-3-hydroxy-4-methylpentanoate (2-isopropylmalate). Carries out the first step of the leucine biosynthesis pathway. This chain is 2-isopropylmalate synthase (leuA), found in Saccharolobus solfataricus (strain ATCC 35092 / DSM 1617 / JCM 11322 / P2) (Sulfolobus solfataricus).